A 152-amino-acid chain; its full sequence is Large-conductance mechanosensitive channel (152 aa).

2 helical membrane-spanning segments follow: residues 14 to 34 (VIDL…VTSL) and 81 to 101 (GLFL…FIVI).

It belongs to the MscL family. Homopentamer.

It localises to the cell membrane. In terms of biological role, channel that opens in response to stretch forces in the membrane lipid bilayer. May participate in the regulation of osmotic pressure changes within the cell. The chain is Large-conductance mechanosensitive channel from Clostridium perfringens (strain ATCC 13124 / DSM 756 / JCM 1290 / NCIMB 6125 / NCTC 8237 / Type A).